The chain runs to 689 residues: DNA topoisomerase 1 (689 aa).

In terms of domain architecture, Toprim spans 3-113 (DNLVIVESPA…KENRVVFNEI (111 aa)). Residues Glu-9 and Asp-82 each coordinate Mg(2+). The region spanning 129–557 (EMNLVDAQQA…FFSSFKQDVE (429 aa)) is the Topo IA-type catalytic domain. The interaction with DNA stretch occupies residues 163 to 168 (SAGRVQ). Tyr-298 acts as the O-(5'-phospho-DNA)-tyrosine intermediate in catalysis. The tract at residues 328 to 357 (SKRKASGKQGDQDAHEAIRPSSTMRTPDDM) is disordered. C4-type zinc fingers lie at residues 577-603 (CEVC…FPDC), 617-645 (CPKC…YPEC), and 658-681 (CPKC…CSNC).

It belongs to the type IA topoisomerase family. Monomer. It depends on Mg(2+) as a cofactor.

It catalyses the reaction ATP-independent breakage of single-stranded DNA, followed by passage and rejoining.. Its function is as follows. Releases the supercoiling and torsional tension of DNA, which is introduced during the DNA replication and transcription, by transiently cleaving and rejoining one strand of the DNA duplex. Introduces a single-strand break via transesterification at a target site in duplex DNA. The scissile phosphodiester is attacked by the catalytic tyrosine of the enzyme, resulting in the formation of a DNA-(5'-phosphotyrosyl)-enzyme intermediate and the expulsion of a 3'-OH DNA strand. The free DNA strand then undergoes passage around the unbroken strand, thus removing DNA supercoils. Finally, in the religation step, the DNA 3'-OH attacks the covalent intermediate to expel the active-site tyrosine and restore the DNA phosphodiester backbone. This chain is DNA topoisomerase 1, found in Staphylococcus aureus (strain N315).